We begin with the raw amino-acid sequence, 71 residues long: Conotoxin LvVIB (71 aa).

The N-terminal stretch at 1 to 17 (VLIIAVLFLTASELVTA) is a signal peptide. A propeptide spanning residues 18–41 (DYTRDKWQYRAASLRDAMRNFRDT) is cleaved from the precursor. Intrachain disulfides connect Cys-43-Cys-57, Cys-50-Cys-62, and Cys-56-Cys-69.

The protein belongs to the conotoxin O1 superfamily. As to expression, expressed by the venom duct.

It is found in the secreted. The chain is Conotoxin LvVIB from Conus lividus (Livid cone).